Consider the following 309-residue polypeptide: Olfactory receptor-like protein OLF4 (309 aa).

Residues 1–25 are Extracellular-facing; that stretch reads MELENDTRIPEFLLLGFSEEPKLQP. N5 is a glycosylation site (N-linked (GlcNAc...) asparagine). The helical transmembrane segment at 26–49 threads the bilayer; it reads FLFGLFLSMYLVTILGNLLLILAV. The Cytoplasmic segment spans residues 50–57; sequence SSDSHLHT. Residues 58 to 79 traverse the membrane as a helical segment; it reads PMYFFLANLSFVDICFTCTTIP. The Extracellular segment spans residues 80-100; the sequence is KMLVNIQTQRKVITYESCIIQ. The chain crosses the membrane as a helical span at residues 101–120; it reads MYFFELFAGIDNFLLTVMAY. Residues 121–139 are Cytoplasmic-facing; that stretch reads DRYMAICYPLHYMVIMNPQ. The helical transmembrane segment at 140-158 threads the bilayer; it reads LCSLLLLVSWIMSALHSLL. The Extracellular segment spans residues 159–196; the sequence is QTLMVLRLSFCTHFQIPHFFCELNQMIQLACSDTFLNN. A helical transmembrane segment spans residues 197-219; that stretch reads MMLYFAAILLGVAPLVGVLYSYF. Residues 220–236 lie on the Cytoplasmic side of the membrane; sequence KIVSSIRGISSAHSKYK. Residues 237 to 260 traverse the membrane as a helical segment; it reads AFSTCASHLSVVSLFYCTSLGVYL. The Extracellular segment spans residues 261-272; that stretch reads SSAAPQSTHTSS. A helical membrane pass occupies residues 273–292; the sequence is VASVMYTVVTPMLNPFIYSL. At 293-309 the chain is on the cytoplasmic side; the sequence is RNKDIKGALNVFFRGKP.

It belongs to the G-protein coupled receptor 1 family.

The protein localises to the cell membrane. Putative odorant or sperm cell receptor. The chain is Olfactory receptor-like protein OLF4 from Canis lupus familiaris (Dog).